A 475-amino-acid polypeptide reads, in one-letter code: Putative aldehyde dehydrogenase (475 aa).

Residues 146-147 (WN) and 223-224 (GS) contribute to the NAD(+) site. Residue glutamate 245 is the Proton acceptor of the active site. Leucine 246 lines the NAD(+) pocket. Cysteine 279 (nucleophile) is an active-site residue. Glutamate 379 contributes to the NAD(+) binding site.

It belongs to the aldehyde dehydrogenase family.

It carries out the reaction an aldehyde + NAD(+) + H2O = a carboxylate + NADH + 2 H(+). The protein is Putative aldehyde dehydrogenase of Staphylococcus aureus (strain MSSA476).